Here is a 173-residue protein sequence, read N- to C-terminus: Mitochondrial holo-[acyl-carrier-protein] synthase (173 aa).

It belongs to the P-Pant transferase superfamily. AcpS family.

It is found in the mitochondrion. The catalysed reaction is apo-[ACP] + CoA = holo-[ACP] + adenosine 3',5'-bisphosphate + H(+). In terms of biological role, transfers the 4'-phosphopantetheine moiety from coenzyme A to a Ser of mitochondrial acyl-carrier-protein. The polypeptide is Mitochondrial holo-[acyl-carrier-protein] synthase (PPT2) (Saccharomyces cerevisiae (strain ATCC 204508 / S288c) (Baker's yeast)).